The primary structure comprises 141 residues: Hemoglobin subunit alpha (141 aa).

Positions 1-141 (VLSANDKANV…VSTVLTSKYR (141 aa)) constitute a Globin domain. At Ser3 the chain carries Phosphoserine. N6-succinyllysine is present on residues Lys7 and Lys11. Lys16 is subject to N6-acetyllysine; alternate. An N6-succinyllysine; alternate modification is found at Lys16. Tyr24 is subject to Phosphotyrosine. Position 35 is a phosphoserine (Ser35). Residue Lys40 is modified to N6-succinyllysine. Ser49 is subject to Phosphoserine. Residue His58 coordinates O2. His87 provides a ligand contact to heme b. A Phosphoserine modification is found at Ser102. Thr108 bears the Phosphothreonine mark. Phosphoserine is present on residues Ser124 and Ser131. Thr134 and Thr137 each carry phosphothreonine. Ser138 carries the post-translational modification Phosphoserine.

The protein belongs to the globin family. As to quaternary structure, heterotetramer of two alpha chains and two beta chains. In terms of tissue distribution, red blood cells.

Involved in oxygen transport from the lung to the various peripheral tissues. In terms of biological role, hemopressin acts as an antagonist peptide of the cannabinoid receptor CNR1. Hemopressin-binding efficiently blocks cannabinoid receptor CNR1 and subsequent signaling. The polypeptide is Hemoglobin subunit alpha (HBA) (Suncus murinus (Asian house shrew)).